A 566-amino-acid polypeptide reads, in one-letter code: Bicarbonate transporter BicA (566 aa).

Residues 1-15 (MQITNKIHFRNIRGD) lie on the Cytoplasmic side of the membrane. The chain crosses the membrane as a helical span at residues 16-36 (IFGGLTAAVIALPMALAFGVA). The Periplasmic portion of the chain corresponds to 37–42 (SGAGAE). Residues 43–63 (AGLWGAVLVGFFAALFGGTPT) form a helical membrane-spanning segment. Leu-64 is a topological domain (cytoplasmic). A helical membrane pass occupies residues 65–85 (ISEPTGPMTVVMTAVIAHFTA). Residue Thr-69 coordinates hydrogencarbonate. Over 86–93 (SAATPEEG) the chain is Periplasmic. A helical membrane pass occupies residues 94–114 (LAIAFTVVMMAGVFQIIFGSL). The Cytoplasmic portion of the chain corresponds to 115–126 (KLGKYVTMMPYT). The helical transmembrane segment at 127–147 (VISGFMSGIGIILVILQLAPF) threads the bilayer. At 148–169 (LGQASPGGGVIGTLQNLPTLLS) the chain is on the periplasmic side. Residues 170 to 190 (NIQPGETALALGTVAIIWFMP) traverse the membrane as a helical segment. The Cytoplasmic segment spans residues 191–196 (EKFKKV). The chain crosses the membrane as a helical span at residues 197 to 217 (IPPQLVALVLGTVIAFFVFPP). At 218 to 247 (EVSDLRRIGEIRAGFPELVRPSFSPVEFQR) the chain is on the periplasmic side. A helical transmembrane segment spans residues 248–268 (MILDAAVLGMLGCIDALLTSV). Na(+) is bound by residues Asp-262, Thr-266, and Gly-304. Over 269–318 (VADSLTRTEHNSNKELIGQGLGNLFSGLFGGIAGAGATMGTVVNIQSGGR) the chain is Cytoplasmic. Ala-305 serves as a coordination point for hydrogencarbonate. A Na(+)-binding site is contributed by Thr-306. A helical membrane pass occupies residues 319 to 339 (TALSGLVRAFVLLVVILGAAS). Leu-340 is a topological domain (periplasmic). A helical transmembrane segment spans residues 341 to 361 (TATIPLAVLAGIAFKVGVDII). The Cytoplasmic segment spans residues 362–371 (DWSFLKRAHE). The chain crosses the membrane as a helical span at residues 372-392 (ISPKGALIMYGVILLTVLVDL). Position 393 (Ile-393) is a topological domain, periplasmic. Residues 394 to 414 (VAVGVGVFVANVLTIERMSNL) form a helical membrane-spanning segment. The Cytoplasmic segment spans residues 415-566 (QSEKVQTVSD…GVTAPSSEMG (152 aa)). The STAS domain maps to 436–546 (KRWLDEGQGR…MSREEALKNA (111 aa)).

This sequence belongs to the SLC26A/SulP transporter (TC 2.A.53) family.

The protein resides in the cell inner membrane. In terms of biological role, low/medium affinity, Na(+)-dependent bicarbonate transporter. In Picosynechococcus sp. (strain ATCC 27264 / PCC 7002 / PR-6) (Agmenellum quadruplicatum), this protein is Bicarbonate transporter BicA (bicA).